The primary structure comprises 348 residues: Putative serine/threonine-protein phosphatase C26H8.05c (348 aa).

The Mn(2+) site is built by Asp53, His55, Asp81, and Asn113. The Proton donor role is filled by His114. His163 and His237 together coordinate Mn(2+). Residues Thr259–Asp282 form a disordered region. The span at Asp269–Pro280 shows a compositional bias: low complexity. Ser272 is modified (phosphoserine). Leu348 bears the Leucine methyl ester mark.

It belongs to the PPP phosphatase family. PP-1 subfamily. Requires Mn(2+) as cofactor.

It localises to the cytoplasm. It is found in the nucleus. The catalysed reaction is O-phospho-L-seryl-[protein] + H2O = L-seryl-[protein] + phosphate. It catalyses the reaction O-phospho-L-threonyl-[protein] + H2O = L-threonyl-[protein] + phosphate. The protein is Putative serine/threonine-protein phosphatase C26H8.05c of Schizosaccharomyces pombe (strain 972 / ATCC 24843) (Fission yeast).